The chain runs to 788 residues: Multifunctional tryptophan biosynthesis protein (788 aa).

The Glutamine amidotransferase type-1 domain maps to 12 to 207 (DILMIDNFDS…MKLKGGTWEE (196 aa)). Position 63–65 (63–65 (GPG)) interacts with L-glutamine. The active-site Nucleophile; for GATase activity is the Cys-91. L-glutamine is bound at residue 141-142 (SL). Catalysis depends on for GATase activity residues His-181 and Glu-183. Positions 238 to 503 (ILEKICAQRQ…DTRAFIRQLL (266 aa)) are indole-3-glycerol phosphate synthase. The interval 520-788 (LSRSCGIRTE…RAFVKAAKKL (269 aa)) is N-(5'-phosphoribosyl)anthranilate isomerase.

The enzyme catalyses N-(5-phospho-beta-D-ribosyl)anthranilate = 1-(2-carboxyphenylamino)-1-deoxy-D-ribulose 5-phosphate. It carries out the reaction 1-(2-carboxyphenylamino)-1-deoxy-D-ribulose 5-phosphate + H(+) = (1S,2R)-1-C-(indol-3-yl)glycerol 3-phosphate + CO2 + H2O. The catalysed reaction is chorismate + L-glutamine = anthranilate + pyruvate + L-glutamate + H(+). The protein operates within amino-acid biosynthesis; L-tryptophan biosynthesis; L-tryptophan from chorismate: step 1/5. It functions in the pathway amino-acid biosynthesis; L-tryptophan biosynthesis; L-tryptophan from chorismate: step 3/5. It participates in amino-acid biosynthesis; L-tryptophan biosynthesis; L-tryptophan from chorismate: step 4/5. In terms of biological role, trifunctional enzyme bearing the Gln amidotransferase (GATase) domain of anthranilate synthase, indole-glycerolphosphate synthase, and phosphoribosylanthranilate isomerase activities. In Phanerodontia chrysosporium (White-rot fungus), this protein is Multifunctional tryptophan biosynthesis protein (TRPC).